We begin with the raw amino-acid sequence, 194 residues long: 7-methyl-GTP pyrophosphatase (194 aa).

Asp69 serves as the catalytic Proton acceptor.

Belongs to the Maf family. YceF subfamily. A divalent metal cation is required as a cofactor.

It localises to the cytoplasm. The enzyme catalyses N(7)-methyl-GTP + H2O = N(7)-methyl-GMP + diphosphate + H(+). Nucleoside triphosphate pyrophosphatase that hydrolyzes 7-methyl-GTP (m(7)GTP). May have a dual role in cell division arrest and in preventing the incorporation of modified nucleotides into cellular nucleic acids. The sequence is that of 7-methyl-GTP pyrophosphatase (yceF1) from Shigella boydii serotype 4 (strain Sb227).